The sequence spans 305 residues: Aurasperone B biosynthesis cluster protein A (305 aa).

The signal sequence occupies residues 1-26 (MSIFFSIRFWPAAISAAILWLPQVLG). Asn-29, Asn-34, Asn-64, Asn-83, Asn-132, Asn-183, Asn-218, and Asn-288 each carry an N-linked (GlcNAc...) asparagine glycan.

It belongs to the bfoA family.

Part of the gene cluster that mediates the biosynthesis of aurasperone B, a dimeric gamma-naphthopyrone. The first step in the biosynthesis of aurasperone B is the production of gamma-naphthopyrone precursor YWA1 by the non-reducing polyketide synthase albA, via condensation of one acetyl-CoA starter unit with 6 malonyl-CoA units. YWA1 is then methylated by aunE at position C-6 to yield foncesin which is further methylated at position C-8 by aunD to produce fonsecin B. A key enzyme in the biosynthetic pathway is the cytochrome P450 monooxygenase aunB which catalyzes the oxidative dimerization of fonsecin B to aurasperone B. AunB also catalyzes the oxidative dimerization of rubrofusarin B into aurasperone A. The protein is Aurasperone B biosynthesis cluster protein A of Aspergillus niger (strain ATCC 1015 / CBS 113.46 / FGSC A1144 / LSHB Ac4 / NCTC 3858a / NRRL 328 / USDA 3528.7).